A 148-amino-acid polypeptide reads, in one-letter code: Glutamyl-tRNA(Gln) amidotransferase subunit C, mitochondrial (148 aa).

Residues 1–10 constitute a mitochondrion transit peptide; sequence MLRLLNKRFY.

This sequence belongs to the GatC family. In terms of assembly, subunit of the heterotrimeric GatCAB amidotransferase (AdT) complex, composed of A, B and C subunits.

Its subcellular location is the mitochondrion. It carries out the reaction L-glutamyl-tRNA(Gln) + L-glutamine + ATP + H2O = L-glutaminyl-tRNA(Gln) + L-glutamate + ADP + phosphate + H(+). Its function is as follows. Allows the formation of correctly charged Gln-tRNA(Gln) through the transamidation of misacylated Glu-tRNA(Gln) in the mitochondria. The reaction takes place in the presence of glutamine and ATP through an activated gamma-phospho-Glu-tRNA(Gln). The polypeptide is Glutamyl-tRNA(Gln) amidotransferase subunit C, mitochondrial (Drosophila ananassae (Fruit fly)).